Here is a 150-residue protein sequence, read N- to C-terminus: Putative STAG3-like protein 4 (150 aa).

The protein belongs to the SCC3 family.

In Homo sapiens (Human), this protein is Putative STAG3-like protein 4 (STAG3L4).